The following is a 916-amino-acid chain: Chitin synthase B (916 aa).

2 disordered regions span residues 1–75 (MAYH…GYSL) and 118–141 (ARSE…GGNG). The span at 14–26 (HTYDDGHQLRDLS) shows a compositional bias: basic and acidic residues. Polar residues predominate over residues 59 to 75 (RGLTASPVQRPTSGYSL). A run of 7 helical transmembrane segments spans residues 544–561 (RWLN…MHFG), 588–608 (FLTW…MDLV), 629–649 (IINT…FILA), 664–684 (SFVA…YLVV), 716–736 (IIII…FMYL), 845–865 (LVTL…SEGL), and 884–904 (ALLW…TWFL).

This sequence belongs to the chitin synthase family. Class III subfamily. Interacts with kibesin kinA. Activity requires trypsin activation, suggesting a zymogenic nature. In terms of processing, phosphorylated at yet unidentified residues in a N-terminal disordered region-dependent manner.

The protein resides in the cell membrane. The protein localises to the cell tip. It localises to the cell septum. The enzyme catalyses [(1-&gt;4)-N-acetyl-beta-D-glucosaminyl](n) + UDP-N-acetyl-alpha-D-glucosamine = [(1-&gt;4)-N-acetyl-beta-D-glucosaminyl](n+1) + UDP + H(+). Its activity is regulated as follows. Activity is stimulated by Mg(2+) and is inhibited by polyoxin D. Its function is as follows. Polymerizes chitin, a structural polymer of the cell wall and septum, by transferring the sugar moiety of UDP-GlcNAc to the non-reducing end of the growing chitin polymer. Does not substantially contribute to the rigidity of the cell wall but is necessary for normal hyphal growth and organization. In addition to its functions in the formation of normal cell walls of hyphae, is also involved in conidiophore and conidia development. The polypeptide is Chitin synthase B (Emericella nidulans (strain FGSC A4 / ATCC 38163 / CBS 112.46 / NRRL 194 / M139) (Aspergillus nidulans)).